The sequence spans 258 residues: Small ribosomal subunit protein uS3 (258 aa).

Residues 43 to 111 enclose the KH type-2 domain; the sequence is IRKLMSTGLE…QVQLNILEVK (69 aa). The disordered stretch occupies residues 217 to 258; that stretch reads AREQASAAPRARGRADRPRGRRDEGAAPQQAAAPAATTGTEA. Positions 229-241 are enriched in basic and acidic residues; sequence GRADRPRGRRDEG. Over residues 242-258 the composition is skewed to low complexity; it reads AAPQQAAAPAATTGTEA.

This sequence belongs to the universal ribosomal protein uS3 family. Part of the 30S ribosomal subunit. Forms a tight complex with proteins S10 and S14.

Functionally, binds the lower part of the 30S subunit head. Binds mRNA in the 70S ribosome, positioning it for translation. The sequence is that of Small ribosomal subunit protein uS3 from Beutenbergia cavernae (strain ATCC BAA-8 / DSM 12333 / CCUG 43141 / JCM 11478 / NBRC 16432 / NCIMB 13614 / HKI 0122).